The chain runs to 302 residues: Glutaminase (302 aa).

S61, N111, E155, N162, Y186, Y238, and V256 together coordinate substrate.

The protein belongs to the glutaminase family. Homotetramer.

The catalysed reaction is L-glutamine + H2O = L-glutamate + NH4(+). The chain is Glutaminase from Pseudomonas paraeruginosa (strain DSM 24068 / PA7) (Pseudomonas aeruginosa (strain PA7)).